The sequence spans 235 residues: Protein CIST1 (235 aa).

A signal peptide spans 1–31; sequence MASSQPPLPPPPPPLLLLALLLLLKVSDTSS. 2 stretches are compositionally biased toward low complexity: residues 28-61 and 76-110; these read DTSS…SSPT and STSH…SQPE. A disordered region spans residues 28–159; it reads DTSSSVSTAT…TGPPSVSLAT (132 aa). The Extracellular segment spans residues 32-184; that stretch reads SVSTATSTAS…GVPRLHRNPG (153 aa). Asn45 is a glycosylation site (N-linked (GlcNAc...) asparagine). Positions 114-136 are enriched in polar residues; the sequence is HPSSGSPSSEHTVTSPSLGSVSL. Residues 185–205 traverse the membrane as a helical segment; the sequence is VVVAVCLLVSALLIGGAIMAV. Residues 206 to 235 lie on the Cytoplasmic side of the membrane; the sequence is RRCHNGVSEFQKLDEGLVSRRSSSAHHTLP.

As to expression, highly expressed in large intestine, small intestine, rumen, and kidney tissues.

It is found in the membrane. This Bos taurus (Bovine) protein is Protein CIST1 (CIST1).